A 106-amino-acid chain; its full sequence is Putative defensin-like protein 224 (106 aa).

A signal peptide spans Met-1–Ala-23. 3 disulfide bridges follow: Cys-60–Cys-78, Cys-64–Cys-84, and Cys-68–Cys-86.

The protein belongs to the DEFL family.

Its subcellular location is the secreted. This is Putative defensin-like protein 224 from Arabidopsis thaliana (Mouse-ear cress).